Here is a 302-residue protein sequence, read N- to C-terminus: GTPase Era (302 aa).

An Era-type G domain is found at 8-175; the sequence is HSGFVAIIGR…LTTLKGQLPE (168 aa). Positions 16–23 are G1; that stretch reads GRPNVGKS. 16 to 23 lines the GTP pocket; that stretch reads GRPNVGKS. Residues 42–46 are G2; the sequence is QTTRN. Residues 63–66 form a G3 region; it reads DTPG. GTP-binding positions include 63 to 67 and 125 to 128; these read DTPGI and NKID. Positions 125–128 are G4; it reads NKID. The segment at 154–156 is G5; it reads ISA. A KH type-2 domain is found at 206 to 283; it reads TRQEVPHSTA…YLELWVKVQE (78 aa).

The protein belongs to the TRAFAC class TrmE-Era-EngA-EngB-Septin-like GTPase superfamily. Era GTPase family. As to quaternary structure, monomer.

Its subcellular location is the cytoplasm. It is found in the cell membrane. Functionally, an essential GTPase that binds both GDP and GTP, with rapid nucleotide exchange. Plays a role in 16S rRNA processing and 30S ribosomal subunit biogenesis and possibly also in cell cycle regulation and energy metabolism. The polypeptide is GTPase Era (Lactiplantibacillus plantarum (strain ATCC BAA-793 / NCIMB 8826 / WCFS1) (Lactobacillus plantarum)).